Here is a 160-residue protein sequence, read N- to C-terminus: D-aminoacyl-tRNA deacylase (160 aa).

The Gly-cisPro motif, important for rejection of L-amino acids signature appears at 146-147; that stretch reads GP.

It belongs to the DTD family. Homodimer.

It is found in the cytoplasm. It carries out the reaction glycyl-tRNA(Ala) + H2O = tRNA(Ala) + glycine + H(+). The enzyme catalyses a D-aminoacyl-tRNA + H2O = a tRNA + a D-alpha-amino acid + H(+). Functionally, an aminoacyl-tRNA editing enzyme that deacylates mischarged D-aminoacyl-tRNAs. Also deacylates mischarged glycyl-tRNA(Ala), protecting cells against glycine mischarging by AlaRS. Acts via tRNA-based rather than protein-based catalysis; rejects L-amino acids rather than detecting D-amino acids in the active site. By recycling D-aminoacyl-tRNA to D-amino acids and free tRNA molecules, this enzyme counteracts the toxicity associated with the formation of D-aminoacyl-tRNA entities in vivo and helps enforce protein L-homochirality. This chain is D-aminoacyl-tRNA deacylase, found in Desulfovibrio desulfuricans (strain ATCC 27774 / DSM 6949 / MB).